The primary structure comprises 264 residues: S-adenosylmethionine decarboxylase proenzyme (264 aa).

Ser-113 (schiff-base intermediate with substrate; via pyruvic acid) is an active-site residue. Position 113 is a pyruvic acid (Ser); by autocatalysis (Ser-113). His-118 acts as the Proton acceptor; for processing activity in catalysis. Cys-141 (proton donor; for catalytic activity) is an active-site residue.

It belongs to the prokaryotic AdoMetDC family. Type 2 subfamily. In terms of assembly, heterooctamer of four alpha and four beta chains arranged as a tetramer of alpha/beta heterodimers. It depends on pyruvate as a cofactor. Is synthesized initially as an inactive proenzyme. Formation of the active enzyme involves a self-maturation process in which the active site pyruvoyl group is generated from an internal serine residue via an autocatalytic post-translational modification. Two non-identical subunits are generated from the proenzyme in this reaction, and the pyruvate is formed at the N-terminus of the alpha chain, which is derived from the carboxyl end of the proenzyme. The post-translation cleavage follows an unusual pathway, termed non-hydrolytic serinolysis, in which the side chain hydroxyl group of the serine supplies its oxygen atom to form the C-terminus of the beta chain, while the remainder of the serine residue undergoes an oxidative deamination to produce ammonia and the pyruvoyl group blocking the N-terminus of the alpha chain.

The enzyme catalyses S-adenosyl-L-methionine + H(+) = S-adenosyl 3-(methylsulfanyl)propylamine + CO2. It functions in the pathway amine and polyamine biosynthesis; S-adenosylmethioninamine biosynthesis; S-adenosylmethioninamine from S-adenosyl-L-methionine: step 1/1. Functionally, catalyzes the decarboxylation of S-adenosylmethionine to S-adenosylmethioninamine (dcAdoMet), the propylamine donor required for the synthesis of the polyamines spermine and spermidine from the diamine putrescine. In Stenotrophomonas maltophilia (strain R551-3), this protein is S-adenosylmethionine decarboxylase proenzyme.